The following is a 104-amino-acid chain: Large ribosomal subunit protein uL24 (104 aa).

It belongs to the universal ribosomal protein uL24 family. In terms of assembly, part of the 50S ribosomal subunit.

One of two assembly initiator proteins, it binds directly to the 5'-end of the 23S rRNA, where it nucleates assembly of the 50S subunit. In terms of biological role, one of the proteins that surrounds the polypeptide exit tunnel on the outside of the subunit. The sequence is that of Large ribosomal subunit protein uL24 from Caulobacter sp. (strain K31).